Consider the following 355-residue polypeptide: Syntaxin-5 (355 aa).

At 1–333 the chain is on the cytoplasmic side; sequence MIPRKRYGSK…KYFQSVTSNR (333 aa). The IxM motif; signal for cargo packaging into COPII-coated vesicles motif lies at 245–247; sequence IDM. The t-SNARE coiled-coil homology domain occupies 263–325; it reads DSYIQSRADT…EAAHSEILKY (63 aa). A coiled-coil region spans residues 287–318; the sequence is FQQLAHMVKEQEETIQRIDENVLGAQLDVEAA. A helical; Anchor for type IV membrane protein membrane pass occupies residues 334–354; it reads WLMVKIFLILIVFFIIFVVFL. A topological domain (vesicular) is located at residue alanine 355.

This sequence belongs to the syntaxin family. Part of a ternary complex containing STX5A, NSFL1C and VCP. Part of a unique SNARE complex composed of the Golgi SNAREs GOSR1, GOSR2 and YKT6. This complex also includes VTI1A. Component of a SNARE complex consisting of STX5, YKT6, GOSR1 and BET1L. Interacts with BET1L. Interacts with BET1. Interacts with COG4. Interacts with GM130/GOLGA2. Interacts (via IxM motif) with SEC24C and SEC24D; mediates STX5 packaging into COPII-coated vesicles. Interacts with VLDLR; this interaction mediates VLDLR translocation from the endoplasmic reticulum to the plasma membrane. Expressed in the brain, heart, spleen, lung, liver, kidney and testis.

It is found in the endoplasmic reticulum-Golgi intermediate compartment membrane. It localises to the golgi apparatus membrane. Functionally, mediates endoplasmic reticulum to Golgi transport. Together with p115/USO1 and GM130/GOLGA2, involved in vesicle tethering and fusion at the cis-Golgi membrane to maintain the stacked and inter-connected structure of the Golgi apparatus. Required for Golgi to endoplasmic reticulum retrogade transport, and for intra-Golgi transport. This is Syntaxin-5 (Stx5) from Rattus norvegicus (Rat).